Reading from the N-terminus, the 299-residue chain is Ficolin-3 (299 aa).

The signal sequence occupies residues 1-23; it reads MDLLWILPSLWLLLLGGPACLKT. Residues 44 to 81 form a disordered region; that stretch reads PSCPGAPGSPGEKGAPGPQGPPGPPGKMGPKGEPGDPV. Positions 48 to 80 constitute a Collagen-like domain; it reads GAPGSPGEKGAPGPQGPPGPPGKMGPKGEPGDP. 6 positions are modified to hydroxyproline: proline 50, proline 53, proline 59, proline 65, proline 68, and proline 77. A compositionally biased stretch (pro residues) spans 61 to 70; the sequence is PQGPPGPPGK. The region spanning 84–299 is the Fibrinogen C-terminal domain; that stretch reads LRCQEGPRNC…PYRRVRMMLR (216 aa). 2 cysteine pairs are disulfide-bonded: cysteine 86–cysteine 110 and cysteine 93–cysteine 121. Asparagine 189 is a glycosylation site (N-linked (GlcNAc...) (complex) asparagine). Residues aspartate 237, aspartate 239, serine 241, and serine 243 each contribute to the Ca(2+) site. Cysteine 245 and cysteine 258 are joined by a disulfide. 258 to 259 is a binding site for a carbohydrate; sequence CY.

It belongs to the ficolin lectin family. Homotrimer. May form an octadecamer consisting of an elementary trimer unit. Does not interact with fibronectin, elastin or zymosan. Interacts with MASP1 and MASP2. The N-terminus is blocked. In terms of tissue distribution, liver and lung. In liver it is produced by bile duct epithelial cells and hepatocytes. In lung it is produced by both ciliated bronchial epithelial cells and type II alveolar epithelial cells.

It is found in the secreted. In terms of biological role, may function in innate immunity through activation of the lectin complement pathway. Calcium-dependent and GlcNAc-binding lectin. Has affinity with GalNAc, GlcNAc, D-fucose, as mono/oligosaccharide and lipopolysaccharides from S.typhimurium and S.minnesota. The polypeptide is Ficolin-3 (FCN3) (Homo sapiens (Human)).